A 32-amino-acid chain; its full sequence is Cytochrome b6-f complex subunit 7 (32 aa).

The helical transmembrane segment at 5-25 (IFGTAAIFWVLIPAGLLGGAL) threads the bilayer.

The protein belongs to the PetM family. In terms of assembly, the 4 large subunits of the cytochrome b6-f complex are cytochrome b6, subunit IV (17 kDa polypeptide, PetD), cytochrome f and the Rieske protein, while the 4 small subunits are PetG, PetL, PetM and PetN. The complex functions as a dimer.

It localises to the cellular thylakoid membrane. Its function is as follows. Component of the cytochrome b6-f complex, which mediates electron transfer between photosystem II (PSII) and photosystem I (PSI), cyclic electron flow around PSI, and state transitions. This is Cytochrome b6-f complex subunit 7 from Prochlorococcus marinus (strain SARG / CCMP1375 / SS120).